Consider the following 291-residue polypeptide: Beta-lactamase OXY-1 (291 aa).

An N-terminal signal peptide occupies residues 1–24 (MLKSSWRKTALMAAAAVPLLLASG). Catalysis depends on S73, which acts as the Acyl-ester intermediate. 237–239 (KTG) lines the substrate pocket.

Belongs to the class-A beta-lactamase family.

It catalyses the reaction a beta-lactam + H2O = a substituted beta-amino acid. Its function is as follows. Hydrolyzes broad-spectrum beta-lactam antibiotics. Active against cephalosporins. In Klebsiella oxytoca, this protein is Beta-lactamase OXY-1 (bla).